Reading from the N-terminus, the 37-residue chain is Large ribosomal subunit protein bL36c (37 aa).

Belongs to the bacterial ribosomal protein bL36 family.

It localises to the plastid. It is found in the chloroplast. The chain is Large ribosomal subunit protein bL36c from Oenothera argillicola (Appalachian evening primrose).